Here is a 474-residue protein sequence, read N- to C-terminus: Magnesium transporter MRS2-A, chloroplastic (474 aa).

The transit peptide at 1 to 55 (MASVSSSPSYSSQAAVLLLLHQPPHQHGHGGACLRYRGSQSQGRGNAVATSLGLS) directs the protein to the chloroplast. Residues 79–129 (GKDGRAVTKDEEEEAAAAAVEEEGEVEVRREEDKPGDDGSREAAARGSGSG) are disordered. The span at 88-103 (DEEEEAAAAAVEEEGE) shows a compositional bias: acidic residues. Over residues 104 to 122 (VEVRREEDKPGDDGSREAA) the composition is skewed to basic and acidic residues. A run of 2 helical transmembrane segments spans residues 412-432 (LLLQ…GIFG) and 444-464 (WAFW…FFIM). The short motif at 432-434 (GMN) is the Required for magnesium transport activity element.

The protein belongs to the CorA metal ion transporter (MIT) (TC 1.A.35.5) family.

It is found in the plastid. The protein localises to the chloroplast membrane. Magnesium transporter that may mediate the influx of magnesium in chloroplast. This Oryza sativa subsp. japonica (Rice) protein is Magnesium transporter MRS2-A, chloroplastic (MRS2-A).